An 88-amino-acid chain; its full sequence is Small ribosomal subunit protein uS17 (88 aa).

This sequence belongs to the universal ribosomal protein uS17 family. Part of the 30S ribosomal subunit.

One of the primary rRNA binding proteins, it binds specifically to the 5'-end of 16S ribosomal RNA. This Saccharophagus degradans (strain 2-40 / ATCC 43961 / DSM 17024) protein is Small ribosomal subunit protein uS17.